The primary structure comprises 75 residues: Protein P8 (75 aa).

Residues 19-47 form a disordered region; that stretch reads PMGGMPSIASSSSAETGQQTQSGNFTGGG. Over residues 26 to 39 the composition is skewed to polar residues; the sequence is IASSSSAETGQQTQ. A helical membrane pass occupies residues 55-72; the sequence is NNQLLIVGAVVIGLFLVI.

Its subcellular location is the virion membrane. This Pseudoalteromonas phage PM2 (Bacteriophage PM2) protein is Protein P8 (VIII).